Here is a 126-residue protein sequence, read N- to C-terminus: Profilin-2 (126 aa).

Ser2 carries the blocked amino end (Ser) modification. Lys104 is modified (N6,N6,N6-trimethyllysine).

This sequence belongs to the profilin family. Occurs in many kinds of cells as a complex with monomeric actin in a 1:1 ratio.

It localises to the cytoplasm. Its subcellular location is the cytoskeleton. In terms of biological role, binds to actin and affects the structure of the cytoskeleton. At high concentrations, profilin prevents the polymerization of actin, whereas it enhances it at low concentrations. By binding to PIP2, it inhibits the formation of IP3 and DG. This chain is Profilin-2, found in Acanthamoeba castellanii (Amoeba).